The following is a 120-amino-acid chain: Ribosome-binding factor A (120 aa).

It belongs to the RbfA family. As to quaternary structure, monomer. Binds 30S ribosomal subunits, but not 50S ribosomal subunits or 70S ribosomes.

It is found in the cytoplasm. In terms of biological role, one of several proteins that assist in the late maturation steps of the functional core of the 30S ribosomal subunit. Associates with free 30S ribosomal subunits (but not with 30S subunits that are part of 70S ribosomes or polysomes). Required for efficient processing of 16S rRNA. May interact with the 5'-terminal helix region of 16S rRNA. The polypeptide is Ribosome-binding factor A (Desulforamulus reducens (strain ATCC BAA-1160 / DSM 100696 / MI-1) (Desulfotomaculum reducens)).